We begin with the raw amino-acid sequence, 1107 residues long: Probable chromatin-remodeling complex ATPase chain (1107 aa).

Disordered stretches follow at residues 1-124 (MAKP…KREK) and 177-217 (GNQS…GSGG). Acidic residues-rich tracts occupy residues 8-25 (DEEEEEVSSSGEEEEEQS), 33-43 (GEEEDEEEEEA), 53-65 (GGEEEEVDEEEIE), and 89-114 (EGDEESQSTEDDEAVVGEDDDADEAE). The stretch at 121 to 147 (KREKARLKEMQKLKKQKIQEILDTQNA) forms a coiled coil. A compositionally biased stretch (basic residues) spans 183 to 193 (KKPRGRGRHAS). Over residues 197–211 (EEEEDEEYLKEEEDA) the composition is skewed to acidic residues. The region spanning 243–408 (IRLYENGING…WSLLNFLLPE (166 aa)) is the Helicase ATP-binding domain. 256–263 (DEMGLGKT) contributes to the ATP binding site. The short motif at 359–362 (DEAH) is the DEAH box element. In terms of domain architecture, Helicase C-terminal spans 536–687 (LLDKLLPKLK…ALVIQQGRLA (152 aa)). SANT domains are found at residues 877–929 (EGFA…ERYK) and 978–1039 (QNKG…DTLI). A coiled-coil region spans residues 1029–1067 (QELARRCDTLIRLVEKENQEYDEQERQARKDKRMAKNMT). The tract at residues 1049–1107 (YDEQERQARKDKRMAKNMTPTKRSALRVSEGETTPSNSFKRRRQSLMDDYVGSGRRKRG) is disordered.

Belongs to the SNF2/RAD54 helicase family. ISWI subfamily.

It localises to the nucleus. Its function is as follows. Possesses intrinsic ATP-dependent nucleosome-remodeling activity. Constitutes the catalytic subunit of several complexes capable of forming ordered nucleosome arrays on chromatin in vitro. This is Probable chromatin-remodeling complex ATPase chain from Oryza sativa subsp. japonica (Rice).